Reading from the N-terminus, the 492-residue chain is Ribose import ATP-binding protein RbsA (492 aa).

ABC transporter domains are found at residues 3–239 (IEMK…VGRS) and 249–492 (AEIR…TGGK). 35–42 (GENGAGKS) serves as a coordination point for ATP.

This sequence belongs to the ABC transporter superfamily. Ribose importer (TC 3.A.1.2.1) family. In terms of assembly, the complex is composed of an ATP-binding protein (RbsA), two transmembrane proteins (RbsC) and a solute-binding protein (RbsB).

Its subcellular location is the cell membrane. The catalysed reaction is D-ribose(out) + ATP + H2O = D-ribose(in) + ADP + phosphate + H(+). Its function is as follows. Part of the ABC transporter complex RbsABC involved in ribose import. Responsible for energy coupling to the transport system. The protein is Ribose import ATP-binding protein RbsA of Lactococcus lactis subsp. cremoris (strain SK11).